A 186-amino-acid chain; its full sequence is Two-component response regulator ARR6 (186 aa).

The Response regulatory domain maps to 26–153 (HVLAVDDSHV…DVKRLRDSLM (128 aa)). D86 bears the 4-aspartylphosphate mark.

This sequence belongs to the ARR family. Type-A subfamily. Post-translationally, two-component system major event consists of a His-to-Asp phosphorelay between a sensor histidine kinase (HK) and a response regulator (RR). In plants, the His-to-Asp phosphorelay involves an additional intermediate named Histidine-containing phosphotransfer protein (HPt). This multistep phosphorelay consists of a His-Asp-His-Asp sequential transfer of a phosphate group between first a His and an Asp of the HK protein, followed by the transfer to a conserved His of the HPt protein and finally the transfer to an Asp in the receiver domain of the RR protein. In terms of tissue distribution, predominantly expressed in roots.

Its subcellular location is the nucleus. Functionally, functions as a response regulator involved in His-to-Asp phosphorelay signal transduction system. Phosphorylation of the Asp residue in the receiver domain activates the ability of the protein to promote the transcription of target genes. Type-A response regulators seem to act as negative regulators of the cytokinin signaling. The chain is Two-component response regulator ARR6 (ARR6) from Arabidopsis thaliana (Mouse-ear cress).